We begin with the raw amino-acid sequence, 183 residues long: Triggering receptor expressed on myeloid cells 3 (183 aa).

Residues 1-19 (MSPLLLWLGLMLCVSGLQA) form the signal peptide. Topologically, residues 20 to 138 (GDEEEHKCFL…AWCQGKPVMV (119 aa)) are extracellular. The Ig-like V-type domain maps to 30 to 128 (EGENLTLTCP…VIILRQRIRL (99 aa)). N-linked (GlcNAc...) asparagine glycosylation occurs at asparagine 33. A disulfide bridge connects residues cysteine 38 and cysteine 110. A helical membrane pass occupies residues 139-159 (IVLTCGFILNKGLVFSVLFVF). The Cytoplasmic portion of the chain corresponds to 160-183 (LCKAGPKVLQPSKTSKVQGVSEKQ).

Interacts with TYROBP/DAP12. As to expression, expressed in macrophages and in T-cells.

It is found in the cell membrane. Forms a receptor signaling complex with TYROBP/DAP12 which mediates activation of macrophages as part of the innate immune response. This is Triggering receptor expressed on myeloid cells 3 from Mus musculus (Mouse).